The chain runs to 332 residues: Holliday junction branch migration complex subunit RuvB (332 aa).

Positions 1-181 (MTRFLDSDAM…FGITGHMEYY (181 aa)) are large ATPase domain (RuvB-L). ATP-binding positions include Leu20, Arg21, Gly62, Lys65, Thr66, Thr67, 128 to 130 (EDF), Arg171, Tyr181, and Arg218. Thr66 serves as a coordination point for Mg(2+). Positions 182–252 (EENDLTEIIE…ITDKALTMLD (71 aa)) are small ATPAse domain (RuvB-S). The tract at residues 255–332 (HEGLDYVDQK…EHLGYQRFDK (78 aa)) is head domain (RuvB-H). Residues Arg291, Arg310, Arg312, and Arg315 each contribute to the DNA site.

Belongs to the RuvB family. In terms of assembly, homohexamer. Forms an RuvA(8)-RuvB(12)-Holliday junction (HJ) complex. HJ DNA is sandwiched between 2 RuvA tetramers; dsDNA enters through RuvA and exits via RuvB. An RuvB hexamer assembles on each DNA strand where it exits the tetramer. Each RuvB hexamer is contacted by two RuvA subunits (via domain III) on 2 adjacent RuvB subunits; this complex drives branch migration. In the full resolvosome a probable DNA-RuvA(4)-RuvB(12)-RuvC(2) complex forms which resolves the HJ.

The protein resides in the cytoplasm. The catalysed reaction is ATP + H2O = ADP + phosphate + H(+). The RuvA-RuvB-RuvC complex processes Holliday junction (HJ) DNA during genetic recombination and DNA repair, while the RuvA-RuvB complex plays an important role in the rescue of blocked DNA replication forks via replication fork reversal (RFR). RuvA specifically binds to HJ cruciform DNA, conferring on it an open structure. The RuvB hexamer acts as an ATP-dependent pump, pulling dsDNA into and through the RuvAB complex. RuvB forms 2 homohexamers on either side of HJ DNA bound by 1 or 2 RuvA tetramers; 4 subunits per hexamer contact DNA at a time. Coordinated motions by a converter formed by DNA-disengaged RuvB subunits stimulates ATP hydrolysis and nucleotide exchange. Immobilization of the converter enables RuvB to convert the ATP-contained energy into a lever motion, pulling 2 nucleotides of DNA out of the RuvA tetramer per ATP hydrolyzed, thus driving DNA branch migration. The RuvB motors rotate together with the DNA substrate, which together with the progressing nucleotide cycle form the mechanistic basis for DNA recombination by continuous HJ branch migration. Branch migration allows RuvC to scan DNA until it finds its consensus sequence, where it cleaves and resolves cruciform DNA. The protein is Holliday junction branch migration complex subunit RuvB of Streptococcus agalactiae serotype Ia (strain ATCC 27591 / A909 / CDC SS700).